Here is a 403-residue protein sequence, read N- to C-terminus: Putative F-box protein At5g41500 (403 aa).

In terms of domain architecture, F-box spans 2 to 47 (ATTISNLPRELIEEILSRVPLRAMKAMRLTCKSWNNLSKSESFMKM).

The sequence is that of Putative F-box protein At5g41500 from Arabidopsis thaliana (Mouse-ear cress).